We begin with the raw amino-acid sequence, 737 residues long: MQPRRAQAPGAQLLPALALLLLLLGAGPRGSSLANPVPAAPLSAPGPCAAQPCRNGGVCTSRPEPDPQHPAPAGEPGYSCTCPAGISGANCQLVADPCASNPCHHGNCSSSSSSSSDGYLCICNEGYEGPNCEQALPSLPATGWTESMAPRQLQPVPATQEPDKILPRSQATVTLPTWQPKTGQKVVEMKWDQVEVIPDIACGNASSNSSAGGRLVSFEVPQNTSVKIRQDATASLILLWKVTATGFQQCSLIDGRSVTPLQASGGLVLLEEMLALGNNHFIGFVNDSVTKSIVALRLTLVVKVSTCVPGESHANDLECSGKGKCTTKPSEATFSCTCEEQYVGTFCEEYDACQRKPCQNNASCIDANEKQDGSNFTCVCLPGYTGELCQSKIDYCILDPCRNGATCISSLSGFTCQCPEGYFGSACEEKVDPCASSPCQNNGTCYVDGVHFTCNCSPGFTGPTCAQLIDFCALSPCAHGTCRSVGTSYKCLCDPGYHGLYCEEEYNECLSAPCLNAATCRDLVNGYECVCLAEYKGTHCELYKDPCANVSCLNGATCDSDGLNGTCICAPGFTGEECDIDINECDSNPCHHGGSCLDQPNGYNCHCPHGWVGANCEIHLQWKSGHMAESLTNMPRHSLYIIIGALCVAFILMLIILIVGICRISRIEYQGSSRPAYEEFYNCRSIDSEFSNAIASIRHARFGKKSRPAMYDVSPIAYEDYSPDDKPLVTLIKTKDL.

The first 34 residues, 1–34 (MQPRRAQAPGAQLLPALALLLLLLGAGPRGSSLA), serve as a signal peptide directing secretion. The Extracellular segment spans residues 35–640 (NPVPAAPLSA…LTNMPRHSLY (606 aa)). EGF-like domains are found at residues 44–92 (APGP…ANCQ) and 94–133 (VADP…PNCE). Residues 44–133 (APGPCAAQPC…NEGYEGPNCE (90 aa)) form an interaction with NOTCH1 region. 6 cysteine pairs are disulfide-bonded: cysteine 48/cysteine 59, cysteine 53/cysteine 80, cysteine 82/cysteine 91, cysteine 98/cysteine 108, cysteine 103/cysteine 121, and cysteine 123/cysteine 132. N-linked (GlcNAc...) asparagine glycosylation is present at asparagine 223. EGF-like domains lie at 309–348 (PGES…TFCE), 349–390 (EYDA…ELCQ), 392–428 (KIDY…SACE), 430–466 (KVDP…PTCA), and 468–503 (LIDF…LYCE). 23 cysteine pairs are disulfide-bonded: cysteine 319/cysteine 336, cysteine 338/cysteine 347, cysteine 353/cysteine 364, cysteine 358/cysteine 378, cysteine 380/cysteine 389, cysteine 396/cysteine 407, cysteine 401/cysteine 416, cysteine 418/cysteine 427, cysteine 434/cysteine 445, cysteine 439/cysteine 454, cysteine 456/cysteine 465, cysteine 472/cysteine 482, cysteine 477/cysteine 491, cysteine 493/cysteine 502, cysteine 509/cysteine 520, cysteine 514/cysteine 529, cysteine 531/cysteine 540, cysteine 547/cysteine 558, cysteine 552/cysteine 567, cysteine 569/cysteine 578, cysteine 585/cysteine 596, cysteine 590/cysteine 605, and cysteine 607/cysteine 616. In terms of domain architecture, EGF-like 8; calcium-binding spans 505-541 (EYNECLSAPCLNAATCRDLVNGYECVCLAEYKGTHCE). One can recognise an EGF-like 9 domain in the interval 543–579 (YKDPCANVSCLNGATCDSDGLNGTCICAPGFTGEECD). Residues 546-568 (PCANVSCLNGATCDSDGLNGTCI) form the Follistatin-like domain. Asparagine 564 carries N-linked (GlcNAc...) asparagine glycosylation. In terms of domain architecture, EGF-like 10; calcium-binding spans 581–617 (DINECDSNPCHHGGSCLDQPNGYNCHCPHGWVGANCE). The helical transmembrane segment at 641–661 (IIIGALCVAFILMLIILIVGI) threads the bilayer. Topologically, residues 662-737 (CRISRIEYQG…LVTLIKTKDL (76 aa)) are cytoplasmic. An interaction with AP1G1 and somatodendritic targeting region spans residues 677–680 (YEEF). A Phosphoserine modification is found at serine 685. Phosphotyrosine occurs at positions 711 and 721. Serine 722 bears the Phosphoserine mark.

In terms of assembly, interacts with AP1G1. Interacts with NOTCH1. In terms of tissue distribution, expressed in brain, spinal cord and adrenal gland.

The protein localises to the cell membrane. In terms of biological role, activator of the NOTCH1 pathway. May mediate neuron-glia interaction during astrocytogenesis. The chain is Delta and Notch-like epidermal growth factor-related receptor (DNER) from Homo sapiens (Human).